We begin with the raw amino-acid sequence, 396 residues long: MSVRLVLAKGREKSLLRRHPWVFSGAVARMEGKANLGETIDIVDHQGKWLARGAYSPASQIRARVWTFDPSESIDIAFFTRRLQQAQKWRDWLAQKDGLDSYRLIAGESDGLPGITIDRFGNFLVLQLLSAGAEYQRAALISALQTLYPECAIYDRSDVAVRKKEGMELTQGPITGELPPALLPIEEHGMKLLVDIQHGHKTGYYLDQRDSRLATRRYVENKRVLNCFSYTGGFAVSALMGGCSQVVSVDTSHEALDIARQNVELNKLDLSKAEFVRDDVFKLLRTYRDRGEKFDVIVMDPPKFVENKSQLMGACRGYKDINMLAIQLLNEGGILLTFSCSGLMTSDLFQKIIADAAIDAGRDVQFIEQFRQAADHPVIATYPEGLYLKGFACRVM.

The 80-residue stretch at Ser-2–Arg-81 folds into the PUA domain.

This sequence belongs to the methyltransferase superfamily. RlmI family.

The protein localises to the cytoplasm. It carries out the reaction cytidine(1962) in 23S rRNA + S-adenosyl-L-methionine = 5-methylcytidine(1962) in 23S rRNA + S-adenosyl-L-homocysteine + H(+). Its function is as follows. Specifically methylates the cytosine at position 1962 (m5C1962) of 23S rRNA. The polypeptide is Ribosomal RNA large subunit methyltransferase I (Escherichia coli (strain UTI89 / UPEC)).